The primary structure comprises 361 residues: Velvet complex subunit B (361 aa).

The region spanning M1–R336 is the Velvet domain. 2 disordered regions span residues P42 to P222 and G327 to S361. Low complexity-rich tracts occupy residues P57–P74 and P93–Q107. The span at D108–T127 shows a compositional bias: polar residues. Over residues Y130–L147 the composition is skewed to pro residues. 3 stretches are compositionally biased toward polar residues: residues S149 to D168, G181 to G196, and S212 to P222. Residues L335 to N349 are compositionally biased toward basic residues.

The protein belongs to the velvet family. VelB subfamily. As to quaternary structure, component of the heterotrimeric velvet complex composed of laeA, veA and velB; VeA acting as a bridging protein between laeA and velB. Forms a heterodimeric complex with vosA; the formation of the velB-vosA complex is light-dependent.

The protein resides in the nucleus. Its subcellular location is the cytoplasm. Functionally, component of the velvet transcription factor complex that controls sexual/asexual developmental ratio in response to light, promoting sexual development in the darkness while stimulating asexual sporulation under illumination. The velvet complex acts as a global regulator for secondary metabolite gene expression. Component of the velB-VosA heterodimeric complex that plays a dual role in activating genes associated with spore maturation and repressing certain development-associated genes. The velB-VosA complex binds DNA through the DNA-binding domain of vosA that recognizes an 11-nucleotide consensus sequence 5'-CTGGCCGCGGC-3' consisting of two motifs in the promoters of key developmental regulatory genes. The protein is Velvet complex subunit B of Coprinopsis cinerea (strain Okayama-7 / 130 / ATCC MYA-4618 / FGSC 9003) (Inky cap fungus).